The sequence spans 239 residues: tRNA (guanine-N(1)-)-methyltransferase (239 aa).

S-adenosyl-L-methionine is bound by residues glycine 113 and 133-138; that span reads IGDYVL. Positions 218-239 are disordered; sequence ERRPDLWAARATQNPPERKTNG.

It belongs to the RNA methyltransferase TrmD family. In terms of assembly, homodimer.

It localises to the cytoplasm. The catalysed reaction is guanosine(37) in tRNA + S-adenosyl-L-methionine = N(1)-methylguanosine(37) in tRNA + S-adenosyl-L-homocysteine + H(+). Specifically methylates guanosine-37 in various tRNAs. This is tRNA (guanine-N(1)-)-methyltransferase from Nitrobacter winogradskyi (strain ATCC 25391 / DSM 10237 / CIP 104748 / NCIMB 11846 / Nb-255).